The sequence spans 382 residues: Mannosyl phosphorylinositol ceramide synthase SUR1 (382 aa).

The Cytoplasmic segment spans residues 1-6 (MRKELK). The helical transmembrane segment at 7–27 (YLICFNILLLLSIIYYTFDLL) threads the bilayer. Residues 28–269 (TLCIDDTVKD…KALENHILSC (242 aa)) are Extracellular-facing. A helical membrane pass occupies residues 270-290 (VVTGFIFGFFILYGEFTFYCW). Topologically, residues 291-382 (LCSKNFSNLT…SKYSLGNNSS (92 aa)) are cytoplasmic. S349 bears the Phosphoserine mark.

The protein belongs to the glycosyltransferase 32 family. Heterodimer of SUR1 and CSG2.

The protein resides in the membrane. The catalysed reaction is a 1D-myo-inositol-1-phospho-N-[(R)-2-hydroxy-very-long-chain fatty acyl]-(R)-4-hydroxysphingoid base + GDP-alpha-D-mannose = an alpha-D-mannosyl-(1&lt;-&gt;6)-1D-myo-inositol-1-phospho-N-[(R)-2-hydroxy-very-long-chain fatty acyl]-(R)-4-hydroxysphingoid base + GDP + H(+). In terms of biological role, involved in the synthesis of mannosyl phosphorylinositol ceramide. Catalyzes the addition of mannosyl to phosphorylinositol ceramide. Suppressor of RVS161 mutation. This chain is Mannosyl phosphorylinositol ceramide synthase SUR1, found in Saccharomyces cerevisiae (strain ATCC 204508 / S288c) (Baker's yeast).